Consider the following 375-residue polypeptide: Succinyl-diaminopimelate desuccinylase (375 aa).

His-66 provides a ligand contact to Zn(2+). Asp-68 is an active-site residue. Position 99 (Asp-99) interacts with Zn(2+). The Proton acceptor role is filled by Glu-133. Residues Glu-134, Glu-162, and His-348 each coordinate Zn(2+).

It belongs to the peptidase M20A family. DapE subfamily. Homodimer. Zn(2+) serves as cofactor. Co(2+) is required as a cofactor.

It carries out the reaction N-succinyl-(2S,6S)-2,6-diaminopimelate + H2O = (2S,6S)-2,6-diaminopimelate + succinate. The protein operates within amino-acid biosynthesis; L-lysine biosynthesis via DAP pathway; LL-2,6-diaminopimelate from (S)-tetrahydrodipicolinate (succinylase route): step 3/3. Catalyzes the hydrolysis of N-succinyl-L,L-diaminopimelic acid (SDAP), forming succinate and LL-2,6-diaminopimelate (DAP), an intermediate involved in the bacterial biosynthesis of lysine and meso-diaminopimelic acid, an essential component of bacterial cell walls. In Shigella flexneri serotype 5b (strain 8401), this protein is Succinyl-diaminopimelate desuccinylase.